Consider the following 114-residue polypeptide: Beta-microseminoprotein (114 aa).

The signal sequence occupies residues Met-1–Ala-20. 5 cysteine pairs are disulfide-bonded: Cys-22/Cys-70, Cys-38/Cys-62, Cys-57/Cys-93, Cys-60/Cys-69, and Cys-84/Cys-107.

It belongs to the beta-microseminoprotein family. In terms of assembly, homodimer; Interacts with PI16.

It localises to the secreted. This chain is Beta-microseminoprotein (MSMB), found in Papio anubis (Olive baboon).